We begin with the raw amino-acid sequence, 152 residues long: MSTKVTVELQRLPHAEGLPLPAYQTAEAAGLDLMAAVPEDAPLTLASGRYALVPTGLAIALPPGHEAQVRPRSGLAAKHGVTVLNSPGTIDADYRGEIKVILINHGAAAFVIKRGERIAQMVIAPVVQAALVPVATLSATDRGAGGFGSTGR.

Substrate-binding positions include 72–74, N85, 89–91, and K99; these read RSG and TID.

This sequence belongs to the dUTPase family. Requires Mg(2+) as cofactor.

The catalysed reaction is dUTP + H2O = dUMP + diphosphate + H(+). It participates in pyrimidine metabolism; dUMP biosynthesis; dUMP from dCTP (dUTP route): step 2/2. In terms of biological role, this enzyme is involved in nucleotide metabolism: it produces dUMP, the immediate precursor of thymidine nucleotides and it decreases the intracellular concentration of dUTP so that uracil cannot be incorporated into DNA. The protein is Deoxyuridine 5'-triphosphate nucleotidohydrolase of Bradyrhizobium diazoefficiens (strain JCM 10833 / BCRC 13528 / IAM 13628 / NBRC 14792 / USDA 110).